The chain runs to 270 residues: tRNA pseudouridine synthase A (270 aa).

Catalysis depends on Asp-60, which acts as the Nucleophile. Positions 107–111 are RNA binding; sequence FHARF. Tyr-118 serves as a coordination point for substrate. The interaction with tRNA stretch occupies residues 168-172; sequence QCQSR.

This sequence belongs to the tRNA pseudouridine synthase TruA family. In terms of assembly, homodimer.

The catalysed reaction is uridine(38/39/40) in tRNA = pseudouridine(38/39/40) in tRNA. Its function is as follows. Formation of pseudouridine at positions 38, 39 and 40 in the anticodon stem and loop of transfer RNAs. The sequence is that of tRNA pseudouridine synthase A from Enterobacter sp. (strain 638).